We begin with the raw amino-acid sequence, 318 residues long: Oxidoreductase swnN (318 aa).

This sequence belongs to the NmrA-type oxidoreductase family. Isoflavone reductase subfamily.

It participates in mycotoxin biosynthesis. Functionally, aminotransferase; part of the gene cluster that mediates the biosynthesis of swainsonine (SW), a cytotoxic fungal alkaloid and a potential cancer therapy drug. Swainsonine production occurs via a multibranched pathway and is dispensable for fungal colonization of plants and infection of insect hosts. The first step of swainsonine biosynthesis is the production of the precursor pipecolic acid (PA) via conversion of L-lysine (Lys) to 1-piperideine-6-carboxylate (P6C) by the aminotransferase swnA, the latter being further reduced to PA by the reductase swnR. The PKS-NRPS hybrid synthetase swnK uptakes and condensates PA and malonyl-CoA with and without skipping of the ketoreductase (KR) domain in order to produce 3 intermediates, 1-oxoindolizidine, (1S)-1-hydroxyindolizin, and (1R)-1-hydroxyindolizine; with the transisomer (1S)-1-hydroxyindolizin being predominant. The terminal thioester reductase (TE) domain of swnK is involved in reduction of the thioester bond to release the intermediate aldehydes. The oxidoreductase swnN could contribute to the reduction of 1-oxoindolizidine to (1S)-1-hydroxyindolizin and (1R)-1-hydroxyindolizine, contributing to the major route of SW production. The dioxygenase swnH2 would be responsible for the oxidization of (1R)-1-hydroxyindolizine into (1R,2S)-1,2-dihydroxyindolizine and of (1S)-1-hydroxyindolizin to yield both (1R,2S)-1,2-dihydroxyindolizine and (1S,2S)-1,2-dihydroxyindolizine. The dioxygenase swnH1 then performs the conversion of the 1,2-dihydroxyindolizine epimers to SW. The chain is Oxidoreductase swnN from Arthroderma benhamiae (strain ATCC MYA-4681 / CBS 112371) (Trichophyton mentagrophytes).